The sequence spans 184 residues: MMKARLETEVSKYMSYVLRHAPDAAGLTLDSGGWVSFDELEKALASKYDVSRAEIIEIVENNPKKRFTLAHNRIRANQGHSVDIDLALNQAEPPAALFHGTSLTNWQSIEREGLKKMQRHHVHLSADVETAKIVAARRKGEHIILRVDAARMFSEGHSFFVSDNGVWLAESVPVQYLSRNAGTP.

Belongs to the KptA/TPT1 family.

Functionally, removes the 2'-phosphate from RNA via an intermediate in which the phosphate is ADP-ribosylated by NAD followed by a presumed transesterification to release the RNA and generate ADP-ribose 1''-2''-cyclic phosphate (APPR&gt;P). May function as an ADP-ribosylase. This chain is Probable RNA 2'-phosphotransferase, found in Rhizobium johnstonii (strain DSM 114642 / LMG 32736 / 3841) (Rhizobium leguminosarum bv. viciae).